Here is a 177-residue protein sequence, read N- to C-terminus: MEELIAKRYLKAIKQGSNAESMREIALIFSILSEAFNDKKFIQIINNPDVSRDQKSEILLAAVKSAGYKEVENLIKLLAEHNRIEIIPAIAEVMRKDIAKTNRVYSGVVYSDSVVDSKVMEDLGNGLGSRFNSKISLKFVKDNFNGIKVDVEDLGVEISFSKARINTQMIEHIIKAI.

This sequence belongs to the ATPase delta chain family. F-type ATPases have 2 components, F(1) - the catalytic core - and F(0) - the membrane proton channel. F(1) has five subunits: alpha(3), beta(3), gamma(1), delta(1), epsilon(1). F(0) has three main subunits: a(1), b(2) and c(10-14). The alpha and beta chains form an alternating ring which encloses part of the gamma chain. F(1) is attached to F(0) by a central stalk formed by the gamma and epsilon chains, while a peripheral stalk is formed by the delta and b chains.

The protein resides in the cell inner membrane. F(1)F(0) ATP synthase produces ATP from ADP in the presence of a proton or sodium gradient. F-type ATPases consist of two structural domains, F(1) containing the extramembraneous catalytic core and F(0) containing the membrane proton channel, linked together by a central stalk and a peripheral stalk. During catalysis, ATP synthesis in the catalytic domain of F(1) is coupled via a rotary mechanism of the central stalk subunits to proton translocation. Its function is as follows. This protein is part of the stalk that links CF(0) to CF(1). It either transmits conformational changes from CF(0) to CF(1) or is implicated in proton conduction. The chain is ATP synthase subunit delta from Sulfurimonas denitrificans (strain ATCC 33889 / DSM 1251) (Thiomicrospira denitrificans (strain ATCC 33889 / DSM 1251)).